A 285-amino-acid polypeptide reads, in one-letter code: Probable endonuclease 4 (285 aa).

Zn(2+) is bound by residues His69, His109, Glu145, Asp179, His182, His216, Asp229, His231, and Glu261.

Belongs to the AP endonuclease 2 family. The cofactor is Zn(2+).

The enzyme catalyses Endonucleolytic cleavage to 5'-phosphooligonucleotide end-products.. In terms of biological role, endonuclease IV plays a role in DNA repair. It cleaves phosphodiester bonds at apurinic or apyrimidinic (AP) sites, generating a 3'-hydroxyl group and a 5'-terminal sugar phosphate. The polypeptide is Probable endonuclease 4 (Salmonella paratyphi A (strain AKU_12601)).